Reading from the N-terminus, the 156-residue chain is S-ribosylhomocysteine lyase (156 aa).

Residues His-56, His-60, and Cys-123 each coordinate Fe cation.

This sequence belongs to the LuxS family. In terms of assembly, homodimer. Fe cation is required as a cofactor.

The enzyme catalyses S-(5-deoxy-D-ribos-5-yl)-L-homocysteine = (S)-4,5-dihydroxypentane-2,3-dione + L-homocysteine. Its function is as follows. Involved in the synthesis of autoinducer 2 (AI-2) which is secreted by bacteria and is used to communicate both the cell density and the metabolic potential of the environment. The regulation of gene expression in response to changes in cell density is called quorum sensing. Catalyzes the transformation of S-ribosylhomocysteine (RHC) to homocysteine (HC) and 4,5-dihydroxy-2,3-pentadione (DPD). The chain is S-ribosylhomocysteine lyase from Staphylococcus saprophyticus subsp. saprophyticus (strain ATCC 15305 / DSM 20229 / NCIMB 8711 / NCTC 7292 / S-41).